Consider the following 487-residue polypeptide: Betaine aldehyde dehydrogenase (487 aa).

K(+)-binding residues include isoleucine 27 and aspartate 93. 149-151 (GAW) provides a ligand contact to NAD(+). Lysine 161 serves as the catalytic Charge relay system. NAD(+) contacts are provided by residues 175-178 (KPSE) and 228-231 (SVPT). The active-site Proton acceptor is the glutamate 249. NAD(+)-binding residues include glycine 251, cysteine 283, and glutamate 384. Cysteine 283 serves as the catalytic Nucleophile. Cysteine 283 bears the Cysteine sulfenic acid (-SOH) mark. K(+)-binding residues include lysine 454 and glycine 457. The Charge relay system role is filled by glutamate 461.

It belongs to the aldehyde dehydrogenase family. Dimer of dimers. K(+) is required as a cofactor.

The enzyme catalyses betaine aldehyde + NAD(+) + H2O = glycine betaine + NADH + 2 H(+). The protein operates within amine and polyamine biosynthesis; betaine biosynthesis via choline pathway; betaine from betaine aldehyde: step 1/1. Involved in the biosynthesis of the osmoprotectant glycine betaine. Catalyzes the irreversible oxidation of betaine aldehyde to the corresponding acid. The sequence is that of Betaine aldehyde dehydrogenase from Mesorhizobium japonicum (strain LMG 29417 / CECT 9101 / MAFF 303099) (Mesorhizobium loti (strain MAFF 303099)).